A 637-amino-acid polypeptide reads, in one-letter code: Threonine--tRNA ligase (637 aa).

Residues 1–61 form the TGS domain; the sequence is MPNVKLPDGN…KEDCSLIIVT (61 aa). Residues 242-533 are catalytic; sequence DHRKLGKALD…LIEHYAGKLP (292 aa). Zn(2+) contacts are provided by Cys333, His384, and His510.

The protein belongs to the class-II aminoacyl-tRNA synthetase family. As to quaternary structure, homodimer. Zn(2+) is required as a cofactor.

It localises to the cytoplasm. It catalyses the reaction tRNA(Thr) + L-threonine + ATP = L-threonyl-tRNA(Thr) + AMP + diphosphate + H(+). Catalyzes the attachment of threonine to tRNA(Thr) in a two-step reaction: L-threonine is first activated by ATP to form Thr-AMP and then transferred to the acceptor end of tRNA(Thr). Also edits incorrectly charged L-seryl-tRNA(Thr). This is Threonine--tRNA ligase from Legionella pneumophila (strain Paris).